Reading from the N-terminus, the 126-residue chain is Protein ApaG (126 aa).

An ApaG domain is found at serine 2–histidine 126.

The polypeptide is Protein ApaG (Pseudomonas entomophila (strain L48)).